The following is a 1356-amino-acid chain: Serine/threonine-protein kinase PSK1 (1356 aa).

The residue at position 10 (S10) is a Phosphoserine. The interval 20 to 115 (KHAITHKGTS…SVDSTVSSPL (96 aa)) is disordered. 2 stretches are compositionally biased toward polar residues: residues 26–37 (KGTSSSVASLQT) and 54–64 (YDTSLSDVSTP). Low complexity predominate over residues 99–115 (LPSTASSSVDSTVSSPL). A phosphoserine mark is found at S192, S202, S255, S286, and S327. The PAS 1 domain maps to 450-518 (RTFTSTKNSA…VLHKLLSTEG (69 aa)). Residues 592 to 608 (PTLSSSSTLSLPKMASS) are compositionally biased toward low complexity. Disordered stretches follow at residues 592–612 (PTLS…PTGS) and 627–660 (YTKP…PVRS). A PAS 2 domain is found at 738–807 (LKLKIHSLPY…FINDKYPALD (70 aa)). S926 is modified (phosphoserine). Residues 948–972 (DSRAHSQSTLSEQEQVPLENDKDSG) form a disordered region. Polar residues predominate over residues 952–961 (HSQSTLSEQE). S1018, S1023, S1035, and S1055 each carry phosphoserine. Over residues 1021 to 1032 (TESLADSKSSGK) the composition is skewed to polar residues. The interval 1021–1066 (TESLADSKSSGKGLSPLEEEKLIDENATENGLAGSPKDEDGIIMTN) is disordered. The residue at position 1079 (T1079) is a Phosphothreonine. In terms of domain architecture, Protein kinase spans 1096 to 1354 (FVSLQKMGEG…IDDINNDKWL (259 aa)). ATP contacts are provided by residues 1102 to 1110 (MGEGAYGKV) and K1125. The Proton acceptor role is filled by D1230.

It belongs to the protein kinase superfamily. Ser/Thr protein kinase family.

The protein resides in the cytoplasm. The catalysed reaction is L-seryl-[protein] + ATP = O-phospho-L-seryl-[protein] + ADP + H(+). It carries out the reaction L-threonyl-[protein] + ATP = O-phospho-L-threonyl-[protein] + ADP + H(+). Functionally, serine/threonine-protein kinase involved in the control of sugar metabolism and translation. Phosphorylates UGP1, which is required for normal glycogen and beta-(1,6)-glucan synthesis. This phosphorylation shifts glucose partitioning toward cell wall glucan synthesis at the expense of glycogen synthesis. This chain is Serine/threonine-protein kinase PSK1 (PSK1), found in Saccharomyces cerevisiae (strain ATCC 204508 / S288c) (Baker's yeast).